Consider the following 244-residue polypeptide: 7-cyano-7-deazaguanine synthase (244 aa).

Residue 14–24 (FSGGQDSATCV) coordinates ATP. Zn(2+) is bound by residues cysteine 202, cysteine 217, cysteine 220, and cysteine 223.

It belongs to the QueC family. The cofactor is Zn(2+).

The catalysed reaction is 7-carboxy-7-deazaguanine + NH4(+) + ATP = 7-cyano-7-deazaguanine + ADP + phosphate + H2O + H(+). It functions in the pathway purine metabolism; 7-cyano-7-deazaguanine biosynthesis. Functionally, catalyzes the ATP-dependent conversion of 7-carboxy-7-deazaguanine (CDG) to 7-cyano-7-deazaguanine (preQ(0)). In Burkholderia multivorans (strain ATCC 17616 / 249), this protein is 7-cyano-7-deazaguanine synthase.